Here is a 977-residue protein sequence, read N- to C-terminus: Receptor protein-tyrosine kinase CEPR2 (977 aa).

A signal peptide spans 1–31 (MSRRPDLLRGSVVATVAATFLLFIFPPNVES). Topologically, residues 32–620 (TVEKQALFRF…NVKRNSSLDG (589 aa)) are extracellular. N-linked (GlcNAc...) asparagine glycosylation is present at N85. 20 LRR repeats span residues 97–121 (LTKL…IVNC), 122–146 (KNLK…PLKS), 148–167 (EILD…WIGN), 168–192 (MNQL…SIGG), 193–217 (LKKL…IFDL), 219–241 (ALDT…ISRL), 242–265 (VNLT…IKNL), 266–288 (TRLR…ELGV), 290–312 (KELR…GFGD), 313–338 (LSHL…GRFS), 340–361 (LDTV…LCQN), 363–385 (KLQF…YGEC), 386–409 (KSLL…FWSL), 411–433 (LAKM…IGLS), 434–457 (TELS…LGRL), 458–481 (TNIE…VGDL), 482–504 (KELS…ELKN), 506–529 (VKLV…LSQI), 530–553 (ASLN…LVKL), and 555–576 (LSFI…LLAV). A glycan (N-linked (GlcNAc...) asparagine) is linked at N128. A glycan (N-linked (GlcNAc...) asparagine) is linked at N205. 3 N-linked (GlcNAc...) asparagine glycosylation sites follow: N243, N251, and N264. N-linked (GlcNAc...) asparagine glycosylation is found at N301 and N325. 2 N-linked (GlcNAc...) asparagine glycosylation sites follow: N469 and N491. N-linked (GlcNAc...) asparagine glycosylation occurs at N615. The chain crosses the membrane as a helical span at residues 621-641 (TLLFLALAIVVVVLVSGLFAL). The Cytoplasmic portion of the chain corresponds to 642–977 (RYRVVKIREL…SQDTTGKITV (336 aa)). The 283-residue stretch at 683 to 965 (LDEDHVIGSG…RKLDDADPCV (283 aa)) folds into the Protein kinase domain. Residues 689–697 (IGSGSAGKV) and K712 each bind ATP. The residue at position 801 (Y801) is a Phosphotyrosine. The active-site Proton acceptor is D814. S846 carries the post-translational modification Phosphoserine. Phosphotyrosine occurs at positions 854 and 861.

This sequence belongs to the protein kinase superfamily. Ser/Thr protein kinase family. Interacts with the root-derived peptide CEP1. Binds to the ammonium transporter AMT1-1. In terms of tissue distribution, expressed in mature leaves, primary roots, and the root tips of both primary and lateral roots.

It is found in the cell membrane. It catalyses the reaction L-tyrosyl-[protein] + ATP = O-phospho-L-tyrosyl-[protein] + ADP + H(+). Receptor kinase involved in the perception of C-terminally encoded plant signaling peptide (CEP) and subsequent regulation of root and shoot development. Together with CEPR1, mediates systemic nitrogen (N)-demand signaling upon the perception of root-derived peptides (e.g. CEP1) via the up-regulation of genes involved in N uptake and assimilation pathways. This is Receptor protein-tyrosine kinase CEPR2 from Arabidopsis thaliana (Mouse-ear cress).